The chain runs to 446 residues: Serine--tRNA ligase, mitochondrial (446 aa).

L-serine is bound at residue 251 to 253 (TAE). ATP-binding positions include 284-286 (RAE) and Val-300. Residue Glu-307 participates in L-serine binding. 371-374 (EISS) contacts ATP. Residue Thr-407 participates in L-serine binding.

The protein belongs to the class-II aminoacyl-tRNA synthetase family. Type-1 seryl-tRNA synthetase subfamily. Homodimer. The tRNA molecule binds across the dimer.

It localises to the mitochondrion matrix. The catalysed reaction is tRNA(Ser) + L-serine + ATP = L-seryl-tRNA(Ser) + AMP + diphosphate + H(+). In terms of biological role, catalyzes the attachment of serine to tRNA(Ser). In Saccharomyces cerevisiae (strain ATCC 204508 / S288c) (Baker's yeast), this protein is Serine--tRNA ligase, mitochondrial (DIA4).